The chain runs to 132 residues: Small ribosomal subunit protein uS12 (132 aa).

D89 is modified (3-methylthioaspartic acid).

The protein belongs to the universal ribosomal protein uS12 family. As to quaternary structure, part of the 30S ribosomal subunit. Contacts proteins S8 and S17. May interact with IF1 in the 30S initiation complex.

Functionally, with S4 and S5 plays an important role in translational accuracy. Its function is as follows. Interacts with and stabilizes bases of the 16S rRNA that are involved in tRNA selection in the A site and with the mRNA backbone. Located at the interface of the 30S and 50S subunits, it traverses the body of the 30S subunit contacting proteins on the other side and probably holding the rRNA structure together. The combined cluster of proteins S8, S12 and S17 appears to hold together the shoulder and platform of the 30S subunit. The polypeptide is Small ribosomal subunit protein uS12 (Campylobacter curvus (strain 525.92)).